The chain runs to 328 residues: Probable membrane-associated kinase regulator 4 (328 aa).

A disordered region spans residues glycine 213–serine 253. The span at glutamine 223–methionine 240 shows a compositional bias: polar residues.

It is found in the cell membrane. The protein is Probable membrane-associated kinase regulator 4 (MAKR4) of Arabidopsis thaliana (Mouse-ear cress).